Consider the following 88-residue polypeptide: Stannin (88 aa).

At 1 to 10 (MSIMDHSPTT) the chain is on the mitochondrial intermembrane side. The chain crosses the membrane as a helical span at residues 11 to 31 (GVVTVIVILIAIAALGALILG). Residues 32–88 (CWCYLRLQRISQSEDEESIVGDGETKEPFLLVQYSAKGPCVERKAKLMTPNGPEVHG) lie on the Cytoplasmic side of the membrane. Phosphoserine is present on S49.

It belongs to the stannin family. As to quaternary structure, monomer.

Its subcellular location is the mitochondrion outer membrane. In terms of biological role, plays a role in the toxic effects of organotins. Plays a role in endosomal maturation. This Homo sapiens (Human) protein is Stannin (SNN).